The following is a 239-amino-acid chain: Cell number regulator 6 (239 aa).

Polar residues predominate over residues 1–10; sequence MAEDATSSHP. Residues 1–33 are disordered; the sequence is MAEDATSSHPSRYVKLTKDQDAPAEDIRPGELN. Residues 16 to 29 are compositionally biased toward basic and acidic residues; the sequence is LTKDQDAPAEDIRP. Helical transmembrane passes span 107–127 and 136–156; these read CVCHAVFVEGGITLAILTAIF and FLIGEGLVFSWWLCATYTGIF.

This sequence belongs to the cornifelin family. As to expression, expressed in roots, leaves, stalks, apical meristems, immature ears, endosperm, pericarp and tassel spikelets.

The protein resides in the membrane. The polypeptide is Cell number regulator 6 (CNR6) (Zea mays (Maize)).